The primary structure comprises 395 residues: Pesticidal crystal protein Cry6Ba (395 aa).

It belongs to the cry6A endotoxin family.

Its function is as follows. Endotoxin with nematicidal activity. This is Pesticidal crystal protein Cry6Ba (cry6Ba) from Bacillus thuringiensis.